We begin with the raw amino-acid sequence, 148 residues long: Calcium-regulated heat stable protein 1 (148 aa).

Residues M1 to P12 show a composition bias toward pro residues. The tract at residues M1–R47 is disordered. Position 2 is an N-acetylserine (S2). 3 positions are modified to phosphoserine: S31, S33, and S42. Position 46 is a phosphothreonine (T46). S53 and S59 each carry phosphoserine. A CSD domain is found at V63–T130. S147 bears the Phosphoserine mark.

As to quaternary structure, homodimer. Interacts with STYX. Can be phosphorylated by DYRK2 (in vitro). Dephosphorylated by calcineurin in a Ca(2+) dependent manner.

The protein resides in the cytoplasm. The protein localises to the P-body. It localises to the cytoplasmic granule. In terms of biological role, binds mRNA and regulates the stability of target mRNA. The sequence is that of Calcium-regulated heat stable protein 1 (Carhsp1) from Mus musculus (Mouse).